A 455-amino-acid polypeptide reads, in one-letter code: Argininosuccinate lyase (455 aa).

The protein belongs to the lyase 1 family. Argininosuccinate lyase subfamily.

It is found in the cytoplasm. The enzyme catalyses 2-(N(omega)-L-arginino)succinate = fumarate + L-arginine. Its pathway is amino-acid biosynthesis; L-arginine biosynthesis; L-arginine from L-ornithine and carbamoyl phosphate: step 3/3. In Shewanella oneidensis (strain ATCC 700550 / JCM 31522 / CIP 106686 / LMG 19005 / NCIMB 14063 / MR-1), this protein is Argininosuccinate lyase.